A 134-amino-acid chain; its full sequence is MPPKTRAAGVKKVRRKEKKNVAHGHAHIKSTFNNTIVSITDPSGNVISWASAGHVGFKGSRKSTPFAAQMAAENAARKAQEHGMRKVDVFVKGPGSGRETAIRSLQAAGLEVGAIQDVTPTPHNGCRPPKRRRV.

This sequence belongs to the universal ribosomal protein uS11 family. Part of the 30S ribosomal subunit. Interacts with proteins S7 and S18. Binds to IF-3.

Functionally, located on the platform of the 30S subunit, it bridges several disparate RNA helices of the 16S rRNA. Forms part of the Shine-Dalgarno cleft in the 70S ribosome. This is Small ribosomal subunit protein uS11 from Parafrankia sp. (strain EAN1pec).